Here is a 461-residue protein sequence, read N- to C-terminus: Ornithine decarboxylase (461 aa).

At Lys-69 the chain carries N6-(pyridoxal phosphate)lysine. Pyridoxal 5'-phosphate is bound by residues Ser-200, Gly-237, and 274-277 (EPGR). The residue at position 303 (Ser-303) is a Phosphoserine; by CK2. 331 to 332 (YD) contributes to the substrate binding site. The active-site Proton donor; shared with dimeric partner is the Cys-360. An S-nitrosocysteine modification is found at Cys-360. Residue Asp-361 coordinates substrate. Tyr-389 is a binding site for pyridoxal 5'-phosphate.

This sequence belongs to the Orn/Lys/Arg decarboxylase class-II family. As to quaternary structure, homodimer. Only the dimer is catalytically active, as the active sites are constructed of residues from both monomers. Does not form a heterodimer with AZIN2. Requires pyridoxal 5'-phosphate as cofactor. As to expression, expressed during testis development in the outer part of the seminiferous tubules.

The catalysed reaction is L-ornithine + H(+) = putrescine + CO2. It participates in amine and polyamine biosynthesis; putrescine biosynthesis via L-ornithine pathway; putrescine from L-ornithine: step 1/1. Inhibited by antizymes (AZs) OAZ1, OAZ2 and OAZ3 in response to polyamine levels. AZs inhibit the assembly of the functional homodimer by binding to ODC monomers. Additionally, OAZ1 targets ODC monomers for ubiquitin-independent proteolytic destruction by the 26S proteasome. In terms of biological role, catalyzes the first and rate-limiting step of polyamine biosynthesis that converts ornithine into putrescine, which is the precursor for the polyamines, spermidine and spermine. Polyamines are essential for cell proliferation and are implicated in cellular processes, ranging from DNA replication to apoptosis. This is Ornithine decarboxylase (Odc1) from Mus musculus (Mouse).